The chain runs to 339 residues: MELNERKLNILKAIVKDYIETAEAIGSRTISKRHDLGVSAATIRNEMADLEELGYLIQPHTSAGRVPSEKGYKLYVNSLMSKSELDDNDKILIEQCMNHNINHIKELIHETSKLLSQLTNYTTVAVTKSLINQSVIKHIQLVAMNDNNILLIVVTDKGDLKKANLTTNVYLDQSKLNLISDNLTRKLLGKSITDLDDNLIAFIKYEISEYSGLIDELLNALNSNMKEEDFSLSLNGATNIFSYPEFNDVLKAKSFLNMLEKKETIADIIKSKGIQKDNLNIIIGSDNDCELAQDCSIVTATYNVDRDLVGRISFIGPTRMDYARIYSIINYMSLLINRK.

This sequence belongs to the HrcA family.

Its function is as follows. Negative regulator of class I heat shock genes (grpE-dnaK-dnaJ and groELS operons). Prevents heat-shock induction of these operons. This chain is Heat-inducible transcription repressor HrcA, found in Clostridioides difficile (strain 630) (Peptoclostridium difficile).